The sequence spans 188 residues: Calcium load-activated calcium channel (188 aa).

Topologically, residues 1-4 are lumenal; it reads MSTM. The chain crosses the membrane as a helical span at residues 5-32; sequence FADTLLIVFISVCTALLAEGITWVLVYR. Residues 32 to 89 adopt a coiled-coil conformation; sequence RTDKYKRLKAEVEKQSKKLEKKKETITESAGRQQKKKIERQEEKLKNNNRDLSMVRMK. Residues 33–86 are Cytoplasmic-facing; it reads TDKYKRLKAEVEKQSKKLEKKKETITESAGRQQKKKIERQEEKLKNNNRDLSMV. Serine 60 is subject to Phosphoserine. Residues 87–106 form a helical membrane-spanning segment; it reads RMKSMFAIGFCFTALMGMFN. At 107–120 the chain is on the lumenal side; it reads SIFDGRVVAKLPFT. An intramembrane segment occupies 121-130; the sequence is PLSYIQGLSH. Residues 131 to 140 are Lumenal-facing; the sequence is RNLLGDDTTD. The helical transmembrane segment at 141 to 162 threads the bilayer; sequence CSFIFLYILCTMSIRQNIQKIL. The Cytoplasmic segment spans residues 163 to 188; sequence GLAPSRAATKQAGGFLGPPPPSGKFS. Phosphoserine is present on serine 188.

This sequence belongs to the TMCO1 family. As to quaternary structure, homodimer and homotetramer. Homodimer under resting conditions; forms homotetramers following ER calcium overload. Component of the GET- and EMC-like (GEL) complex, composed of RAB5IF/OPTI and TMCO1. The GEL complex is part of the multi-pass translocon (MPT) complex, composed of three subcomplexes, the GEL complex (composed of RAB5IF/OPTI and TMCO1), the BOS complex (composed of NCLN/Nicalin, NOMO1 and TMEM147) and the PAT complex (composed of WDR83OS/Asterix and CCDC47). The MPT complex associates with the SEC61 complex.

It is found in the endoplasmic reticulum membrane. Its subcellular location is the golgi apparatus membrane. The protein localises to the mitochondrion membrane. It carries out the reaction Ca(2+)(in) = Ca(2+)(out). In terms of biological role, endoplasmic reticulum (ER) calcium-selective channel preventing intracellular Ca2(+) stores from overfilling and maintaining calcium homeostasis in the ER. In response to endoplasmic reticulum (ER) Ca2(+) overloading, assembles into a homotetramer, forming a functional calcium-selective channel facilitating Ca2(+) release. Mediates ER Ca2(+) homeostasis in osteoblasts and plays a key role in bone formation, via the CaMKII-HDAC4-RUNX2 signaling axis. Component of the multi-pass translocon (MPT) complex that mediates insertion of multi-pass membrane proteins into the lipid bilayer of membranes. The MPT complex takes over after the SEC61 complex: following membrane insertion of the first few transmembrane segments of proteins by the SEC61 complex, the MPT complex occludes the lateral gate of the SEC61 complex to promote insertion of subsequent transmembrane regions. Within the MPT complex, the GEL subcomplex may mediate insertion of transmembrane regions into the membrane. The sequence is that of Calcium load-activated calcium channel from Bos taurus (Bovine).